A 182-amino-acid chain; its full sequence is UPF0397 protein llmg_0343 (182 aa).

5 helical membrane passes run 8-28, 42-62, 74-94, 114-134, and 146-166; these read IVVATGIGAALFVIIGWLINI, AVLALFSALFGPLAGFLIGFI, APWWTWVLGSGLMGLFLGFGV, IVQFLANVVVWGLIAPIGDIL, and QGVVAGLVNALTIAVAGTLLL.

This sequence belongs to the UPF0397 family.

The protein localises to the cell membrane. The protein is UPF0397 protein llmg_0343 of Lactococcus lactis subsp. cremoris (strain MG1363).